We begin with the raw amino-acid sequence, 37 residues long: Cytochrome b6-f complex subunit 5 (37 aa).

Residues 5–25 (LLSGIVLGLIPITLAGLFVTA) form a helical membrane-spanning segment.

This sequence belongs to the PetG family. In terms of assembly, the 4 large subunits of the cytochrome b6-f complex are cytochrome b6, subunit IV (17 kDa polypeptide, PetD), cytochrome f and the Rieske protein, while the 4 small subunits are PetG, PetL, PetM and PetN. The complex functions as a dimer.

The protein resides in the plastid. It is found in the chloroplast thylakoid membrane. Its function is as follows. Component of the cytochrome b6-f complex, which mediates electron transfer between photosystem II (PSII) and photosystem I (PSI), cyclic electron flow around PSI, and state transitions. PetG is required for either the stability or assembly of the cytochrome b6-f complex. The sequence is that of Cytochrome b6-f complex subunit 5 from Chara vulgaris (Common stonewort).